A 401-amino-acid chain; its full sequence is MKKKRVILAYSGGLDTSIIVRWLTEKGYEVITYTADVGQGEELSEIPEKARRAGAIEAIVEDLKETFAENYCLPTLRALALYEGKYPLTAALSRPLIAERLVYYAEKFNADYVAHGSTGKGNDQVRFELSVWALNPDIEVLAPVREWEFKSREEQVEYAQRFNIPVKATKEKPYSIDRNLWGVSIECGPLEDPWQEPPQDAYQITQSPEEAPDEPEYVTVGFEKGKPVYLNGERYEEQWKLIANLNEIAGRHGVGRIDMVENRLVGIKSREIYEAPGAMVLYEAYRDLLSLVLDRFTFHYFLTHIPHEYAKLVYEGLWFTPLREALDAFTNKIAEFATGEVRLKLYKGSVSVVGRRSPNSLYVEELATYSEKDQFDQIAGKHFTKVWGLPLKVLGRVRKGK.

ATP-binding positions include 9–17 (AYSGGLDTS) and A35. Residue Y86 coordinates L-citrulline. G116 is an ATP binding site. The L-aspartate site is built by T118, N122, and D123. Residue N122 coordinates L-citrulline. Residues R126, S175, S184, E261, and Y273 each contribute to the L-citrulline site.

This sequence belongs to the argininosuccinate synthase family. Type 1 subfamily. Homotetramer.

The protein localises to the cytoplasm. The catalysed reaction is L-citrulline + L-aspartate + ATP = 2-(N(omega)-L-arginino)succinate + AMP + diphosphate + H(+). It participates in amino-acid biosynthesis; L-arginine biosynthesis; L-arginine from L-ornithine and carbamoyl phosphate: step 2/3. The polypeptide is Argininosuccinate synthase (Aquifex aeolicus (strain VF5)).